Consider the following 340-residue polypeptide: Arginase 1, mitochondrial (340 aa).

A mitochondrion-targeting transit peptide spans 1-24; that stretch reads MGGVAAGTRWIHHVRRLSAAKVSA. Mn(2+) is bound by residues histidine 159, aspartate 183, histidine 185, and aspartate 187. Residues 185 to 189 and 193 to 195 contribute to the substrate site; these read HPDIY and EGN. Residues aspartate 268 and aspartate 270 each coordinate Mn(2+). Residue glutamate 311 coordinates substrate.

This sequence belongs to the arginase family. Mn(2+) serves as cofactor.

It is found in the mitochondrion. The enzyme catalyses L-arginine + H2O = urea + L-ornithine. The protein operates within nitrogen metabolism; urea cycle; L-ornithine and urea from L-arginine: step 1/1. In terms of biological role, catalyzes the hydrolysis of L-arginine to urea and L-ornithine. The latter can be utilized in the urea cycle or as a precursor for the synthesis of both polyamines and proline. This Oryza sativa subsp. japonica (Rice) protein is Arginase 1, mitochondrial (ARG1).